Consider the following 204-residue polypeptide: High frequency lysogenization protein HflD homolog (204 aa).

The protein belongs to the HflD family.

The protein resides in the cytoplasm. It localises to the cell inner membrane. The chain is High frequency lysogenization protein HflD homolog from Xylella fastidiosa (strain M23).